The chain runs to 236 residues: Peptidyl-prolyl cis-trans isomerase CYP21-4 (236 aa).

The chain crosses the membrane as a helical; Signal-anchor for type II membrane protein span at residues 22 to 42 (ISISTIIVCNLVVAVVILSLV). The tract at residues 52-71 (SRNTIEHETRSQRFEDTNTA) is disordered. Residues 54-67 (NTIEHETRSQRFED) show a composition bias toward basic and acidic residues. The 151-residue stretch at 82–232 (FADINTSKGL…SPIGITGVVL (151 aa)) folds into the PPIase cyclophilin-type domain. Asn-86 is a glycosylation site (N-linked (GlcNAc...) asparagine).

It belongs to the cyclophilin-type PPIase family. Ubiquitous.

The protein resides in the membrane. The catalysed reaction is [protein]-peptidylproline (omega=180) = [protein]-peptidylproline (omega=0). PPIases accelerate the folding of proteins. It catalyzes the cis-trans isomerization of proline imidic peptide bonds in oligopeptides. The sequence is that of Peptidyl-prolyl cis-trans isomerase CYP21-4 (CYP21-4) from Arabidopsis thaliana (Mouse-ear cress).